The primary structure comprises 199 residues: Imidazoleglycerol-phosphate dehydratase (199 aa).

Belongs to the imidazoleglycerol-phosphate dehydratase family.

The protein localises to the cytoplasm. It carries out the reaction D-erythro-1-(imidazol-4-yl)glycerol 3-phosphate = 3-(imidazol-4-yl)-2-oxopropyl phosphate + H2O. The protein operates within amino-acid biosynthesis; L-histidine biosynthesis; L-histidine from 5-phospho-alpha-D-ribose 1-diphosphate: step 6/9. This is Imidazoleglycerol-phosphate dehydratase from Kineococcus radiotolerans (strain ATCC BAA-149 / DSM 14245 / SRS30216).